A 182-amino-acid polypeptide reads, in one-letter code: Large ribosomal subunit protein uL5c (182 aa).

This sequence belongs to the universal ribosomal protein uL5 family. Part of the 50S ribosomal subunit; contacts the 5S rRNA.

It localises to the plastid. The protein resides in the chloroplast. In terms of biological role, binds 5S rRNA, forms part of the central protuberance of the 50S subunit. The chain is Large ribosomal subunit protein uL5c (rpl5) from Emiliania huxleyi (Coccolithophore).